The sequence spans 132 residues: Small ribosomal subunit protein uS8 (132 aa).

The protein belongs to the universal ribosomal protein uS8 family. In terms of assembly, part of the 30S ribosomal subunit. Contacts proteins S5 and S12.

In terms of biological role, one of the primary rRNA binding proteins, it binds directly to 16S rRNA central domain where it helps coordinate assembly of the platform of the 30S subunit. This Rickettsia massiliae (strain Mtu5) protein is Small ribosomal subunit protein uS8.